A 361-amino-acid polypeptide reads, in one-letter code: Basic helix-loop-helix protein 79 (361 aa).

The interval 66 to 159 is disordered; it reads APEASNGSGS…ASTVTAGQKT (94 aa). Basic and acidic residues predominate over residues 124–138; sequence GRPERARPGAKKKAE. Positions 146 to 157 are enriched in polar residues; it reads PATSASTVTAGQ. A Nuclear localization signal motif is present at residues 166 to 173; sequence ARRGQATD. The segment at 170–183 is basic motif; degenerate; the sequence is QATDSHSLAERVRR. One can recognise a bHLH domain in the interval 170 to 220; that stretch reads QATDSHSLAERVRRERISERMRYLQELVPGCNKVTGKAGMLDEIINYVQSL. A helix-loop-helix motif region spans residues 184-220; the sequence is ERISERMRYLQELVPGCNKVTGKAGMLDEIINYVQSL.

Belongs to the bHLH protein family. In terms of assembly, homodimer. Interacts with IBH1.

The protein localises to the nucleus. Together with BCL1, positive regulator of cell elongation at least partially through increased gibberellic acid (GA) biosynthesis. The sequence is that of Basic helix-loop-helix protein 79 from Oryza sativa subsp. indica (Rice).